A 540-amino-acid polypeptide reads, in one-letter code: MAAIVAIGRKLARTPQWRIVQHQSLLRRAVSTSFSSSVSQNHSFSSAFHRAGHVHSQVLSYLPHFASSNRFSTKTISETFDINLTALAPLEKGLIDLIRQVSELESEADAMASLEDSSFDLNHDSFYSLIWELRDEWRLAFLAFKWGEKRGCDDQKSCDLMIWVLGNHQKFNIAWCLIRDMFNVSKDTRKAMFLMMDRYAAANDTSQAIRTFDIMDKFKHTPYDEAFQGLLCALCRHGHIEKAEEFMLASKKLFPVDVEGFNVILNGWCNIWTDVTEAKRIWREMGNYCITPNKDSYSHMISCFSKVGNLFDSLRLYDEMKKRGLAPGIEVYNSLVYVLTREDCFDEAMKLMKKLNEEGLKPDSVTYNSMIRPLCEAGKLDVARNVLATMISENLSPTVDTFHAFLEAVNFEKTLEVLGQMKISDLGPTEETFLLILGKLFKGKQPENALKIWAEMDRFEIVANPALYLATIQGLLSCGWLEKAREIYSEMKSKGFVGNPMLQKLLEEQKVKGVRKSKRMNLQKVGSQEGYKGQRSVDRK.

A mitochondrion-targeting transit peptide spans 1 to 87 (MAAIVAIGRK…ETFDINLTAL (87 aa)). 10 PPR repeats span residues 154-184 (DQKS…MFNV), 188-222 (TRKA…KHTP), 223-253 (YDEA…SKKL), 257-292 (DVEG…CITP), 293-327 (NKDS…GLAP), 328-362 (GIEV…GLKP), 363-397 (DSVT…NLSP), 402-428 (FHAF…DLGP), 429-463 (TEET…EIVA), and 464-498 (NPAL…GFVG). A disordered region spans residues 514–540 (VRKSKRMNLQKVGSQEGYKGQRSVDRK).

Belongs to the PPR family. P subfamily.

It localises to the mitochondrion. This Arabidopsis thaliana (Mouse-ear cress) protein is Pentatricopeptide repeat-containing protein At1g80880, mitochondrial.